The sequence spans 636 residues: Probable potassium transport system protein Kup (636 aa).

The next 12 helical transmembrane spans lie at 22 to 42 (MGLL…SPLY), 64 to 84 (ILSL…VMFI), 114 to 134 (ALMV…SMIT), 150 to 170 (FEGI…ALFL), 182 to 202 (LFGP…VHGI), 220 to 240 (FFIV…LALT), 261 to 281 (WFAL…AILL), 293 to 313 (LLAP…ATVI), 351 to 371 (IYIG…VIGF), 383 to 403 (VAVT…MLLL), 408 to 428 (PVLA…FFAA), and 433 to 453 (IVQG…LMST).

This sequence belongs to the HAK/KUP transporter (TC 2.A.72) family.

The protein resides in the cell inner membrane. It carries out the reaction K(+)(in) + H(+)(in) = K(+)(out) + H(+)(out). In terms of biological role, transport of potassium into the cell. Likely operates as a K(+):H(+) symporter. The protein is Probable potassium transport system protein Kup of Pseudomonas entomophila (strain L48).